We begin with the raw amino-acid sequence, 73 residues long: Venom protein 55.1 (73 aa).

The signal sequence occupies residues 1–19; sequence MNFLCILFVVSLISSLSKC. At Pro57 the chain carries Proline amide. Positions 61 to 73 are excised as a propeptide; that stretch reads RRSFDLYALVNAK.

This sequence belongs to the diuretic hormone class 2 family. As to expression, expressed by the venom gland.

It localises to the secreted. Regulates fluid secretion. The polypeptide is Venom protein 55.1 (Lychas mucronatus (Chinese swimming scorpion)).